Here is a 47-residue protein sequence, read N- to C-terminus: Turripeptide Ici9.1 (47 aa).

Intrachain disulfides connect cysteine 1/cysteine 31, cysteine 5/cysteine 24, and cysteine 13/cysteine 45. Residues 1–47 (CLSVCSMEYWPVCGSDGKTYPNECHLTSEACMSNTDITVAHVGKCDQ) form the Kazal-like domain.

This sequence belongs to the conopeptide P-like superfamily. As to expression, expressed by the venom duct.

The protein localises to the secreted. Its function is as follows. Acts as a neurotoxin by inhibiting an ion channel. May also act as a serine protease inhibitor, since it possess the kazal serine protease inhibitor signature. The sequence is that of Turripeptide Ici9.1 from Iotyrris cingulifera (Sea snail).